The sequence spans 194 residues: Protein ORF31 (194 aa).

Positions 1-25 (MKSVASPLCQFHGVFCLYQCRQCLA) are cleaved as a signal peptide.

It belongs to the herpesviridae UL92 family. As to quaternary structure, interacts with ORF34.

It localises to the host nucleus. The protein localises to the host cytoplasm. Functionally, plays an important role in the expression of late genes. May play a role in viral replication. This is Protein ORF31 (ORF31) from Homo sapiens (Human).